The chain runs to 213 residues: 3-demethoxyubiquinol 3-hydroxylase (213 aa).

The Fe cation site is built by E62, E92, H95, E144, E176, and H179.

It belongs to the COQ7 family. The cofactor is Fe cation.

It localises to the cell membrane. It catalyses the reaction a 5-methoxy-2-methyl-3-(all-trans-polyprenyl)benzene-1,4-diol + AH2 + O2 = a 3-demethylubiquinol + A + H2O. Its pathway is cofactor biosynthesis; ubiquinone biosynthesis. Catalyzes the hydroxylation of 2-nonaprenyl-3-methyl-6-methoxy-1,4-benzoquinol during ubiquinone biosynthesis. This is 3-demethoxyubiquinol 3-hydroxylase from Legionella pneumophila subsp. pneumophila (strain Philadelphia 1 / ATCC 33152 / DSM 7513).